We begin with the raw amino-acid sequence, 343 residues long: Phosphoribosylformylglycinamidine cyclo-ligase (343 aa).

This sequence belongs to the AIR synthase family.

Its subcellular location is the cytoplasm. It carries out the reaction 2-formamido-N(1)-(5-O-phospho-beta-D-ribosyl)acetamidine + ATP = 5-amino-1-(5-phospho-beta-D-ribosyl)imidazole + ADP + phosphate + H(+). The protein operates within purine metabolism; IMP biosynthesis via de novo pathway; 5-amino-1-(5-phospho-D-ribosyl)imidazole from N(2)-formyl-N(1)-(5-phospho-D-ribosyl)glycinamide: step 2/2. This chain is Phosphoribosylformylglycinamidine cyclo-ligase, found in Rippkaea orientalis (strain PCC 8801 / RF-1) (Cyanothece sp. (strain PCC 8801)).